The primary structure comprises 344 residues: Uroporphyrinogen decarboxylase (344 aa).

Substrate contacts are provided by residues 26 to 30, Asp-76, Tyr-151, Ser-206, and His-321; that span reads RQAGR.

This sequence belongs to the uroporphyrinogen decarboxylase family. In terms of assembly, homodimer.

It localises to the cytoplasm. The catalysed reaction is uroporphyrinogen III + 4 H(+) = coproporphyrinogen III + 4 CO2. It participates in porphyrin-containing compound metabolism; protoporphyrin-IX biosynthesis; coproporphyrinogen-III from 5-aminolevulinate: step 4/4. Catalyzes the decarboxylation of four acetate groups of uroporphyrinogen-III to yield coproporphyrinogen-III. This Sinorhizobium fredii (strain NBRC 101917 / NGR234) protein is Uroporphyrinogen decarboxylase.